A 347-amino-acid polypeptide reads, in one-letter code: F-box/kelch-repeat protein At5g03020 (347 aa).

The disordered stretch occupies residues 1-21 (MTEEMSKESPPPPPTSFSSLP). Residues 14 to 62 (PTSFSSLPDDVALDCRARISRFHYPTLSLVSKGFRTLIASPELEATRSF) form the F-box domain. Kelch repeat units follow at residues 119–165 (QIYI…VIDG) and 167–215 (IYVI…KKKH).

This is F-box/kelch-repeat protein At5g03020 from Arabidopsis thaliana (Mouse-ear cress).